A 248-amino-acid polypeptide reads, in one-letter code: Ribonuclease 3 (248 aa).

The region spanning 6-136 (LAYLQTLIGS…LIGAIYLDKG (131 aa)) is the RNase III domain. E49 is a Mg(2+) binding site. D53 is a catalytic residue. Mg(2+) contacts are provided by D122 and E125. The active site involves E125. A DRBM domain is found at 163–231 (NYKSCLIEYS…AKEAMERIIA (69 aa)).

It belongs to the ribonuclease III family. In terms of assembly, homodimer. The cofactor is Mg(2+).

The protein resides in the cytoplasm. The enzyme catalyses Endonucleolytic cleavage to 5'-phosphomonoester.. Its function is as follows. Digests double-stranded RNA. Involved in the processing of primary rRNA transcript to yield the immediate precursors to the large and small rRNAs (23S and 16S). Processes some mRNAs, and tRNAs when they are encoded in the rRNA operon. Processes pre-crRNA and tracrRNA of type II CRISPR loci if present in the organism. The polypeptide is Ribonuclease 3 (Chlorobium chlorochromatii (strain CaD3)).